We begin with the raw amino-acid sequence, 207 residues long: Recombination protein RecR (207 aa).

The segment at 60-75 adopts a C4-type zinc-finger fold; that stretch reads CRRCHNISDSGVCTIC. The Toprim domain maps to 83-178; that stretch reads STLCVVENIR…RVSVIARGIA (96 aa).

This sequence belongs to the RecR family.

May play a role in DNA repair. It seems to be involved in an RecBC-independent recombinational process of DNA repair. It may act with RecF and RecO. This chain is Recombination protein RecR, found in Porphyromonas gingivalis (strain ATCC 33277 / DSM 20709 / CIP 103683 / JCM 12257 / NCTC 11834 / 2561).